The primary structure comprises 624 residues: Phosphomethylpyrimidine synthase (624 aa).

Substrate contacts are provided by residues Asn-231, Met-260, Tyr-289, His-325, 345 to 347, 386 to 389, and Glu-425; these read SRG and DGLR. Residue His-429 coordinates Zn(2+). Tyr-452 contacts substrate. Residue His-493 coordinates Zn(2+). [4Fe-4S] cluster contacts are provided by Cys-573, Cys-576, and Cys-581.

It belongs to the ThiC family. Homodimer. [4Fe-4S] cluster is required as a cofactor.

It carries out the reaction 5-amino-1-(5-phospho-beta-D-ribosyl)imidazole + S-adenosyl-L-methionine = 4-amino-2-methyl-5-(phosphooxymethyl)pyrimidine + CO + 5'-deoxyadenosine + formate + L-methionine + 3 H(+). Its pathway is cofactor biosynthesis; thiamine diphosphate biosynthesis. Functionally, catalyzes the synthesis of the hydroxymethylpyrimidine phosphate (HMP-P) moiety of thiamine from aminoimidazole ribotide (AIR) in a radical S-adenosyl-L-methionine (SAM)-dependent reaction. The polypeptide is Phosphomethylpyrimidine synthase (Myxococcus xanthus (strain DK1622)).